We begin with the raw amino-acid sequence, 277 residues long: Ribosomal RNA small subunit methyltransferase A (277 aa).

Residues N27, L29, G54, E75, D95, and N118 each coordinate S-adenosyl-L-methionine.

It belongs to the class I-like SAM-binding methyltransferase superfamily. rRNA adenine N(6)-methyltransferase family. RsmA subfamily.

Its subcellular location is the cytoplasm. The catalysed reaction is adenosine(1518)/adenosine(1519) in 16S rRNA + 4 S-adenosyl-L-methionine = N(6)-dimethyladenosine(1518)/N(6)-dimethyladenosine(1519) in 16S rRNA + 4 S-adenosyl-L-homocysteine + 4 H(+). In terms of biological role, specifically dimethylates two adjacent adenosines (A1518 and A1519) in the loop of a conserved hairpin near the 3'-end of 16S rRNA in the 30S particle. May play a critical role in biogenesis of 30S subunits. This chain is Ribosomal RNA small subunit methyltransferase A, found in Chlamydia muridarum (strain MoPn / Nigg).